Here is a 132-residue protein sequence, read N- to C-terminus: Large ribosomal subunit protein bL19 (132 aa).

Belongs to the bacterial ribosomal protein bL19 family.

Functionally, this protein is located at the 30S-50S ribosomal subunit interface and may play a role in the structure and function of the aminoacyl-tRNA binding site. In Nitrosomonas europaea (strain ATCC 19718 / CIP 103999 / KCTC 2705 / NBRC 14298), this protein is Large ribosomal subunit protein bL19.